Here is a 157-residue protein sequence, read N- to C-terminus: Protein MG115 homolog (157 aa).

This sequence belongs to the CinA family.

The sequence is that of Protein MG115 homolog from Mycoplasma pneumoniae (strain ATCC 29342 / M129 / Subtype 1) (Mycoplasmoides pneumoniae).